A 126-amino-acid chain; its full sequence is Holo-[acyl-carrier-protein] synthase (126 aa).

Residues aspartate 8 and glutamate 60 each coordinate Mg(2+).

It belongs to the P-Pant transferase superfamily. AcpS family. It depends on Mg(2+) as a cofactor.

It is found in the cytoplasm. The enzyme catalyses apo-[ACP] + CoA = holo-[ACP] + adenosine 3',5'-bisphosphate + H(+). Its function is as follows. Transfers the 4'-phosphopantetheine moiety from coenzyme A to a Ser of acyl-carrier-protein. This is Holo-[acyl-carrier-protein] synthase from Ehrlichia canis (strain Jake).